Here is a 205-residue protein sequence, read N- to C-terminus: NADH-ubiquinone oxidoreductase chain 6 (205 aa).

A run of 3 helical transmembrane segments spans residues 48-68 (FFAMIFPVVHIGAIAVSFLFV), 86-106 (YLPVSGIIGLIFWWEMFFILD), and 150-170 (VWFLVPSLILLVAMIGAIVLT).

It belongs to the complex I subunit 6 family. Complex I is composed of about 45 different subunits.

The protein localises to the mitochondrion membrane. The enzyme catalyses a ubiquinone + NADH + 5 H(+)(in) = a ubiquinol + NAD(+) + 4 H(+)(out). Its function is as follows. Core subunit of the mitochondrial membrane respiratory chain NADH dehydrogenase (Complex I) that is believed to belong to the minimal assembly required for catalysis. Complex I functions in the transfer of electrons from NADH to the respiratory chain. The immediate electron acceptor for the enzyme is believed to be ubiquinone. In Brassica campestris (Field mustard), this protein is NADH-ubiquinone oxidoreductase chain 6 (ND6).